The sequence spans 1281 residues: Protein ETHYLENE-INSENSITIVE 2 (1281 aa).

Over 1–21 the chain is Cytoplasmic; that stretch reads MDGQQLRSSESPASGGGGVTG. A helical membrane pass occupies residues 22-42; sequence GGAPHLFHALGPALLISIGYI. Over 43–61 the chain is Extracellular; that stretch reads DLGKWVAAVEAGSRFGLDL. The helical transmembrane segment at 62–82 threads the bilayer; it reads VLLALLFNFMAILCQYLAACI. The Cytoplasmic portion of the chain corresponds to 83-112; the sequence is GTVTGRSLAEICHQEYSRPTCIFLGVQAGL. A helical membrane pass occupies residues 113–133; that stretch reads SLLTSELTMIFGIALGFNLLF. At 134-137 the chain is on the extracellular side; sequence EYDD. Residues 138–158 form a helical membrane-spanning segment; it reads LITGICFATVVPNLLPYAISH. Residues 159-163 are Cytoplasmic-facing; the sequence is LGKKM. Residues 164–184 form a helical membrane-spanning segment; sequence VGTLNACIAGFALLCYVLGLL. The Extracellular portion of the chain corresponds to 185–208; it reads VSQPQIPLTTNVIFPKLSGESAYS. Residues 209-229 form a helical membrane-spanning segment; it reads LMALLGANVMAHNFYIHSSVV. Residues 230 to 238 lie on the Cytoplasmic side of the membrane; that stretch reads QGQKRSAFA. The helical transmembrane segment at 239 to 259 threads the bilayer; the sequence is VGALFHDHLFSVLFIFTGIFL. The Extracellular portion of the chain corresponds to 260–297; sequence VNHVLMNSAAADSTNTLLLTFQDVVELMNQIFVNPMAP. Residues 298 to 318 traverse the membrane as a helical segment; that stretch reads TIFLVVLLFSSHIISLTSAIG. Topologically, residues 319–325 are cytoplasmic; the sequence is SQVISQH. Residues 326-346 traverse the membrane as a helical segment; the sequence is LFGINLPLSGHHLILKAFAIV. Topologically, residues 347 to 362 are extracellular; it reads PALYCAKVAGAEGIYQ. A helical membrane pass occupies residues 363 to 383; the sequence is LLIICQIIQAMLLPSSVVPLF. The Cytoplasmic portion of the chain corresponds to 384–400; the sequence is RVASSRLIMGAHRVSLH. The chain crosses the membrane as a helical span at residues 401-421; it reads LEILTFLAFLLMLFSNIIFMA. Residues 422–447 lie on the Extracellular side of the membrane; it reads EMLFGDSGWLNTLKGNTGSPVVFPST. Residues 448 to 468 traverse the membrane as a helical segment; sequence VLITVACVSVAFSLYMAVTPL. Topologically, residues 469 to 1281 are cytoplasmic; the sequence is KSGSHEAELQ…KRRLSSKGQQ (813 aa). Disordered regions lie at residues 540-565 and 593-665; these read IESDHDSQHSTAHTSTAPESCHSPSF and ESTV…NGSG. Polar residues predominate over residues 548–557; that stretch reads HSTAHTSTAP. Basic and acidic residues predominate over residues 599–610; sequence VDSKSTGERDIE.

It belongs to the NRAMP (TC 2.A.55) family. As to expression, expressed in roots, leaf sheaths, leaf blades, flowers, developing seeds, germinating seeds and young seedlings. Expressed in adventitious roots, vascular tissues of the seminal roots, lateral roots, the connecting region between vascular tissues and lateral roots, mature leaf, mature stem, tips of adventitious roots derived from the node, shoot apex, young panicle, anthers, pistil, stigma, ovary, seed coat and fruit coat pericarp.

It localises to the membrane. Central factor in ethylene signaling pathways that control development, senescence and grain size. Acts as a positive component of the ethylene-signaling pathway. The protein is Protein ETHYLENE-INSENSITIVE 2 of Oryza sativa subsp. japonica (Rice).